The sequence spans 48 residues: Large ribosomal subunit protein bL33A (48 aa).

Belongs to the bacterial ribosomal protein bL33 family.

This Metamycoplasma arthritidis (strain 158L3-1) (Mycoplasma arthritidis) protein is Large ribosomal subunit protein bL33A.